A 106-amino-acid polypeptide reads, in one-letter code: Cell division topological specificity factor (106 aa).

This sequence belongs to the MinE family.

Functionally, prevents the cell division inhibition by proteins MinC and MinD at internal division sites while permitting inhibition at polar sites. This ensures cell division at the proper site by restricting the formation of a division septum at the midpoint of the long axis of the cell. This Prochlorococcus marinus subsp. pastoris (strain CCMP1986 / NIES-2087 / MED4) protein is Cell division topological specificity factor.